The chain runs to 364 residues: Uroporphyrinogen decarboxylase (364 aa).

Residues 28–32, D78, Y160, T215, and H333 each bind substrate; that span reads RQAGR.

The protein belongs to the uroporphyrinogen decarboxylase family. As to quaternary structure, homodimer.

It is found in the cytoplasm. It catalyses the reaction uroporphyrinogen III + 4 H(+) = coproporphyrinogen III + 4 CO2. Its pathway is porphyrin-containing compound metabolism; protoporphyrin-IX biosynthesis; coproporphyrinogen-III from 5-aminolevulinate: step 4/4. Functionally, catalyzes the decarboxylation of four acetate groups of uroporphyrinogen-III to yield coproporphyrinogen-III. This is Uroporphyrinogen decarboxylase from Burkholderia mallei (strain NCTC 10247).